The sequence spans 256 residues: Thiazole synthase (256 aa).

Lys96 serves as the catalytic Schiff-base intermediate with DXP. Residues Gly157, 183 to 184 (AG), and 205 to 206 (NT) contribute to the 1-deoxy-D-xylulose 5-phosphate site.

It belongs to the ThiG family. In terms of assembly, homotetramer. Forms heterodimers with either ThiH or ThiS.

The protein resides in the cytoplasm. The catalysed reaction is [ThiS sulfur-carrier protein]-C-terminal-Gly-aminoethanethioate + 2-iminoacetate + 1-deoxy-D-xylulose 5-phosphate = [ThiS sulfur-carrier protein]-C-terminal Gly-Gly + 2-[(2R,5Z)-2-carboxy-4-methylthiazol-5(2H)-ylidene]ethyl phosphate + 2 H2O + H(+). It participates in cofactor biosynthesis; thiamine diphosphate biosynthesis. In terms of biological role, catalyzes the rearrangement of 1-deoxy-D-xylulose 5-phosphate (DXP) to produce the thiazole phosphate moiety of thiamine. Sulfur is provided by the thiocarboxylate moiety of the carrier protein ThiS. In vitro, sulfur can be provided by H(2)S. The polypeptide is Thiazole synthase (Bacillus mycoides (strain KBAB4) (Bacillus weihenstephanensis)).